The primary structure comprises 427 residues: Serine--tRNA ligase (427 aa).

L-serine is bound at residue 231-233; that stretch reads TAE. 262–264 lines the ATP pocket; sequence RSE. Glu-285 serves as a coordination point for L-serine. 349–352 serves as a coordination point for ATP; that stretch reads EISS. Residue Ser-385 coordinates L-serine.

Belongs to the class-II aminoacyl-tRNA synthetase family. Type-1 seryl-tRNA synthetase subfamily. As to quaternary structure, homodimer. The tRNA molecule binds across the dimer.

Its subcellular location is the cytoplasm. The enzyme catalyses tRNA(Ser) + L-serine + ATP = L-seryl-tRNA(Ser) + AMP + diphosphate + H(+). The catalysed reaction is tRNA(Sec) + L-serine + ATP = L-seryl-tRNA(Sec) + AMP + diphosphate + H(+). It participates in aminoacyl-tRNA biosynthesis; selenocysteinyl-tRNA(Sec) biosynthesis; L-seryl-tRNA(Sec) from L-serine and tRNA(Sec): step 1/1. Its function is as follows. Catalyzes the attachment of serine to tRNA(Ser). Is also able to aminoacylate tRNA(Sec) with serine, to form the misacylated tRNA L-seryl-tRNA(Sec), which will be further converted into selenocysteinyl-tRNA(Sec). The protein is Serine--tRNA ligase of Allorhizobium ampelinum (strain ATCC BAA-846 / DSM 112012 / S4) (Agrobacterium vitis (strain S4)).